Reading from the N-terminus, the 286-residue chain is Bifunctional protein FolD (286 aa).

Residues 168-170, Thr195, and Val236 each bind NADP(+); that span reads GRG.

The protein belongs to the tetrahydrofolate dehydrogenase/cyclohydrolase family. In terms of assembly, homodimer.

The catalysed reaction is (6R)-5,10-methylene-5,6,7,8-tetrahydrofolate + NADP(+) = (6R)-5,10-methenyltetrahydrofolate + NADPH. It carries out the reaction (6R)-5,10-methenyltetrahydrofolate + H2O = (6R)-10-formyltetrahydrofolate + H(+). It participates in one-carbon metabolism; tetrahydrofolate interconversion. Catalyzes the oxidation of 5,10-methylenetetrahydrofolate to 5,10-methenyltetrahydrofolate and then the hydrolysis of 5,10-methenyltetrahydrofolate to 10-formyltetrahydrofolate. This chain is Bifunctional protein FolD, found in Mycolicibacterium gilvum (strain PYR-GCK) (Mycobacterium gilvum (strain PYR-GCK)).